The primary structure comprises 1179 residues: ATP-dependent helicase/deoxyribonuclease subunit B (1179 aa).

Belongs to the helicase family. AddB/RexB type 2 subfamily. In terms of assembly, heterodimer of AddA and RexB. Requires Mg(2+) as cofactor.

Its function is as follows. The heterodimer acts as both an ATP-dependent DNA helicase and an ATP-dependent, dual-direction single-stranded exonuclease. Recognizes the chi site generating a DNA molecule suitable for the initiation of homologous recombination. This subunit has 5' -&gt; 3' nuclease activity but not helicase activity. This chain is ATP-dependent helicase/deoxyribonuclease subunit B, found in Lactobacillus delbrueckii subsp. bulgaricus (strain ATCC 11842 / DSM 20081 / BCRC 10696 / JCM 1002 / NBRC 13953 / NCIMB 11778 / NCTC 12712 / WDCM 00102 / Lb 14).